Here is a 187-residue protein sequence, read N- to C-terminus: Photosystem I assembly protein Ycf4 (187 aa).

2 helical membrane-spanning segments follow: residues 25-45 (YLWAIIVTMGGIGFLLSGISS) and 69-89 (MSFYGLLGTIYGIFLWLTVIW).

It belongs to the Ycf4 family.

It is found in the cellular thylakoid membrane. Its function is as follows. Seems to be required for the assembly of the photosystem I complex. This chain is Photosystem I assembly protein Ycf4, found in Trichodesmium erythraeum (strain IMS101).